We begin with the raw amino-acid sequence, 250 residues long: Vacuolar protein sorting-associated protein 22 homolog 1 (250 aa).

Residues 35–55 (MKEQLSTFRSQLEEFARKHKN) adopt a coiled-coil conformation.

It belongs to the SNF8 family. As to quaternary structure, component of the endosomal sorting complex required for transport II (ESCRT-II), composed of VPS22, VPS25 and VPS36.

The protein resides in the endosome. In terms of biological role, component of the endosomal sorting complex required for transport II (ESCRT-II), which is required for multivesicular body (MVB) formation and sorting of endosomal cargo proteins into MVBs. The ESCRT-II complex is probably involved in the recruitment of the ESCRT-III complex. The sequence is that of Vacuolar protein sorting-associated protein 22 homolog 1 (VP22-1) from Arabidopsis thaliana (Mouse-ear cress).